The following is a 386-amino-acid chain: Leupaxin (386 aa).

At Met1 the chain carries N-acetylmethionine. The short motif at 3–15 (ELDALLEELERST) is the LD motif 1 element. Residues 12 to 51 (ERSTLQDSDEYSNSAPLPLDQSSRKESNLDETSKMLSVQD) are disordered. The span at 16 to 26 (LQDSDEYSNSA) shows a compositional bias: polar residues. The residue at position 19 (Ser19) is a Phosphoserine. Tyr22 carries the phosphotyrosine modification. A compositionally biased stretch (basic and acidic residues) spans 33–44 (SSRKESNLDETS). Tyr62 carries the post-translational modification Phosphotyrosine. Short sequence motifs (LD motif) lie at residues 70–82 (NVYS…KKSP) and 92–103 (QLDELMAHLSEM). A Phosphotyrosine; by LYN modification is found at Tyr72. Residue Ser81 is modified to Phosphoserine. 4 consecutive LIM zinc-binding domains span residues 150–209 (GHCA…LFSP), 210–267 (RCAY…AMFS), 268–327 (PKCG…RRGT), and 328–386 (LCHG…LFSL).

It belongs to the paxillin family. In terms of assembly, interacts with unphosphorylated ITGA4. Interacts with AR and SRF. Interacts with PTK2B/PYK2, PTPN22 and PTPN12. Interacts (via LD motif 3) with LYN and the interaction is induced upon B-cell antigen receptor (BCR) activation. Interacts (via LD motif 3) with PTK2/FAK. Post-translationally, phosphorylated on tyrosine residues. Phosphorylation on Tyr-72 is important for its inhibitory function. Bombesin stimulates phosphorylation on Tyr-22, Tyr-62 and Tyr-72.

The protein localises to the cytoplasm. Its subcellular location is the cell junction. The protein resides in the focal adhesion. It localises to the nucleus. It is found in the perinuclear region. The protein localises to the cell projection. Its subcellular location is the podosome. The protein resides in the cell membrane. Transcriptional coactivator for androgen receptor (AR) and serum response factor (SRF). Contributes to the regulation of cell adhesion, spreading and cell migration and acts as a negative regulator in integrin-mediated cell adhesion events. Suppresses the integrin-induced tyrosine phosphorylation of paxillin (PXN). May play a critical role as an adapter protein in the formation of the adhesion zone in osteoclasts. Negatively regulates B-cell antigen receptor (BCR) signaling. The polypeptide is Leupaxin (LPXN) (Oryctolagus cuniculus (Rabbit)).